Reading from the N-terminus, the 642-residue chain is Threonine--tRNA ligase (642 aa).

Positions 1 to 61 constitute a TGS domain; that stretch reads MPVITLPDGS…ETDAELSIIT (61 aa). A catalytic region spans residues 243–534; the sequence is DHRKIGKQLD…LIEEYAGRFP (292 aa). Residues cysteine 334, histidine 385, and histidine 511 each coordinate Zn(2+).

This sequence belongs to the class-II aminoacyl-tRNA synthetase family. In terms of assembly, homodimer. The cofactor is Zn(2+).

The protein resides in the cytoplasm. It carries out the reaction tRNA(Thr) + L-threonine + ATP = L-threonyl-tRNA(Thr) + AMP + diphosphate + H(+). In terms of biological role, catalyzes the attachment of threonine to tRNA(Thr) in a two-step reaction: L-threonine is first activated by ATP to form Thr-AMP and then transferred to the acceptor end of tRNA(Thr). Also edits incorrectly charged L-seryl-tRNA(Thr). This is Threonine--tRNA ligase from Shewanella sp. (strain ANA-3).